The primary structure comprises 151 residues: UPF0178 protein Hhal_1913 (151 aa).

The protein belongs to the UPF0178 family.

This Halorhodospira halophila (strain DSM 244 / SL1) (Ectothiorhodospira halophila (strain DSM 244 / SL1)) protein is UPF0178 protein Hhal_1913.